Here is a 361-residue protein sequence, read N- to C-terminus: MAIKRSGNNNLSPNVKSDLLSPEVIPQERSTSPELEQQEASLRPQRLADYIGQRDLKEVLRIAIQAAQGRQEAIDHLLLYGPPGLGKTTLALILAEEMQVRCKITAAPALERPRDITGLLLALQPGDILFIDEIHRLNRLTEELLYPAMEDFRLDITMGKGQSAKVRSLKLAHFTLVGATTKVGSLTSPLRDRFGLIQRLRFYEVDELQQIILRTAGILSVSISPTGAEAIAMRARGTPRIANRLLKRVRDYAQVKQQPEIDPALASEALDLYQVDKRGLDWTDRLVLQTLIEQFQGGPTGLEAIAAATGEDAKTIEEVYEPYLLQIGYLARTSRGRIATTAAYEHLGLTPPTPLLPWKES.

Polar residues-rich tracts occupy residues 1-15 (MAIKRSGNNNLSPNV) and 28-40 (ERSTSPELEQQEA). The tract at residues 1–41 (MAIKRSGNNNLSPNVKSDLLSPEVIPQERSTSPELEQQEAS) is disordered. Positions 13–203 (PNVKSDLLSP…FGLIQRLRFY (191 aa)) are large ATPase domain (RuvB-L). ATP contacts are provided by residues Leu42, Arg43, Gly84, Lys87, Thr88, Thr89, 150-152 (EDF), Arg193, Tyr203, and Arg240. Thr88 is a Mg(2+) binding site. The interval 204–274 (EVDELQQIIL…LASEALDLYQ (71 aa)) is small ATPAse domain (RuvB-S). The segment at 277-361 (KRGLDWTDRL…PTPLLPWKES (85 aa)) is head domain (RuvB-H). DNA is bound by residues Arg332 and Arg337.

This sequence belongs to the RuvB family. Homohexamer. Forms an RuvA(8)-RuvB(12)-Holliday junction (HJ) complex. HJ DNA is sandwiched between 2 RuvA tetramers; dsDNA enters through RuvA and exits via RuvB. An RuvB hexamer assembles on each DNA strand where it exits the tetramer. Each RuvB hexamer is contacted by two RuvA subunits (via domain III) on 2 adjacent RuvB subunits; this complex drives branch migration. In the full resolvosome a probable DNA-RuvA(4)-RuvB(12)-RuvC(2) complex forms which resolves the HJ.

It is found in the cytoplasm. It carries out the reaction ATP + H2O = ADP + phosphate + H(+). In terms of biological role, the RuvA-RuvB-RuvC complex processes Holliday junction (HJ) DNA during genetic recombination and DNA repair, while the RuvA-RuvB complex plays an important role in the rescue of blocked DNA replication forks via replication fork reversal (RFR). RuvA specifically binds to HJ cruciform DNA, conferring on it an open structure. The RuvB hexamer acts as an ATP-dependent pump, pulling dsDNA into and through the RuvAB complex. RuvB forms 2 homohexamers on either side of HJ DNA bound by 1 or 2 RuvA tetramers; 4 subunits per hexamer contact DNA at a time. Coordinated motions by a converter formed by DNA-disengaged RuvB subunits stimulates ATP hydrolysis and nucleotide exchange. Immobilization of the converter enables RuvB to convert the ATP-contained energy into a lever motion, pulling 2 nucleotides of DNA out of the RuvA tetramer per ATP hydrolyzed, thus driving DNA branch migration. The RuvB motors rotate together with the DNA substrate, which together with the progressing nucleotide cycle form the mechanistic basis for DNA recombination by continuous HJ branch migration. Branch migration allows RuvC to scan DNA until it finds its consensus sequence, where it cleaves and resolves cruciform DNA. Its function is as follows. Participates in UV-tolerance of Synechocystis PCC 6803. The chain is Holliday junction branch migration complex subunit RuvB from Synechocystis sp. (strain ATCC 27184 / PCC 6803 / Kazusa).